The sequence spans 195 residues: Protein GrpE (195 aa).

Residues 1 to 60 (MAKDEEKNSQASAAPNEGEVKAKQEQTSAKEPAAKAGETEKVADLQKQVEELTKQLDDQK) form a disordered region. The segment covering 37–60 (GETEKVADLQKQVEELTKQLDDQK) has biased composition (basic and acidic residues).

This sequence belongs to the GrpE family. As to quaternary structure, homodimer.

It localises to the cytoplasm. Its function is as follows. Participates actively in the response to hyperosmotic and heat shock by preventing the aggregation of stress-denatured proteins, in association with DnaK and GrpE. It is the nucleotide exchange factor for DnaK and may function as a thermosensor. Unfolded proteins bind initially to DnaJ; upon interaction with the DnaJ-bound protein, DnaK hydrolyzes its bound ATP, resulting in the formation of a stable complex. GrpE releases ADP from DnaK; ATP binding to DnaK triggers the release of the substrate protein, thus completing the reaction cycle. Several rounds of ATP-dependent interactions between DnaJ, DnaK and GrpE are required for fully efficient folding. The chain is Protein GrpE from Limosilactobacillus fermentum (strain NBRC 3956 / LMG 18251) (Lactobacillus fermentum).